The chain runs to 772 residues: C-Maf-inducing protein (772 aa).

Residues 52–160 (KLLQEGDIQV…WFHSLQWKKK (109 aa)) form the PH domain. LRR repeat units follow at residues 662-683 (NLENLSLAFTNVTSACAEQLIK), 686-706 (SLKQLNLWSTQFGDAGLRVLS), 711-731 (TLQVLNLCETPVSDAGLLALS), and 735-755 (SLCNLNMNSTKLSADTYEDLK).

The protein resides in the nucleus. Its subcellular location is the cytoplasm. Functionally, plays a role in T-cell signaling pathway. The polypeptide is C-Maf-inducing protein (cmip) (Xenopus laevis (African clawed frog)).